The chain runs to 175 residues: Sec-independent protein translocase protein TatB (175 aa).

The helical transmembrane segment at 1-21 (MFDIGWSELVLIGVVALIAIG) threads the bilayer. Disordered regions lie at residues 100 to 132 (KPAETSSTTAIEAPATSSEALTTPTTPEAPTPE) and 155 to 175 (QAPVVAQDTAPSEAIKDAKAS). Residues 111 to 132 (EAPATSSEALTTPTTPEAPTPE) show a composition bias toward low complexity.

Belongs to the TatB family. In terms of assembly, the Tat system comprises two distinct complexes: a TatABC complex, containing multiple copies of TatA, TatB and TatC subunits, and a separate TatA complex, containing only TatA subunits. Substrates initially bind to the TatABC complex, which probably triggers association of the separate TatA complex to form the active translocon.

It is found in the cell inner membrane. Its function is as follows. Part of the twin-arginine translocation (Tat) system that transports large folded proteins containing a characteristic twin-arginine motif in their signal peptide across membranes. Together with TatC, TatB is part of a receptor directly interacting with Tat signal peptides. TatB may form an oligomeric binding site that transiently accommodates folded Tat precursor proteins before their translocation. This is Sec-independent protein translocase protein TatB from Bradyrhizobium diazoefficiens (strain JCM 10833 / BCRC 13528 / IAM 13628 / NBRC 14792 / USDA 110).